Consider the following 322-residue polypeptide: Acetyl-coenzyme A carboxylase carboxyl transferase subunit beta (322 aa).

Residues 24-293 (LWIKCPDTGQ…PAVEEPAVVD (270 aa)) form the CoA carboxyltransferase N-terminal domain.

The protein belongs to the AccD/PCCB family. In terms of assembly, acetyl-CoA carboxylase is a heterohexamer composed of biotin carboxyl carrier protein (AccB), biotin carboxylase (AccC) and two subunits each of ACCase subunit alpha (AccA) and ACCase subunit beta (AccD).

It localises to the cytoplasm. The catalysed reaction is N(6)-carboxybiotinyl-L-lysyl-[protein] + acetyl-CoA = N(6)-biotinyl-L-lysyl-[protein] + malonyl-CoA. It functions in the pathway lipid metabolism; malonyl-CoA biosynthesis; malonyl-CoA from acetyl-CoA: step 1/1. Its function is as follows. Component of the acetyl coenzyme A carboxylase (ACC) complex. Biotin carboxylase (BC) catalyzes the carboxylation of biotin on its carrier protein (BCCP) and then the CO(2) group is transferred by the transcarboxylase to acetyl-CoA to form malonyl-CoA. The chain is Acetyl-coenzyme A carboxylase carboxyl transferase subunit beta from Rhodopseudomonas palustris (strain HaA2).